A 229-amino-acid chain; its full sequence is MAKLVLVRHGKSEWNKQNRFTGWVDVDLAPEGIEEAKKAGQKLKEAGFCFDICFSSYLKRAIKTGIIILEELDLLFIDHLKDWRFNERHYGALTGLNKDEVKAEVGEEKFLLYRRSYDVPPPPLSEDDKRHPRFDPHYKNFPVELLPNTESLKDNQIRAMAAFHERVAPLLVEGKDVLITAHGNTIRGMVKELDGISDEDIPKFEIATGIPRVYEFDEALHIKNVYNID.

Substrate contacts are provided by residues Arg8–Asn15, Thr21–Gly22, Arg60, Glu87–Tyr90, Lys98, Arg114–Arg115, and Gly183–Asn184. The active-site Tele-phosphohistidine intermediate is His9. Catalysis depends on Glu87, which acts as the Proton donor/acceptor.

This sequence belongs to the phosphoglycerate mutase family. BPG-dependent PGAM subfamily. In terms of assembly, homodimer.

It carries out the reaction (2R)-2-phosphoglycerate = (2R)-3-phosphoglycerate. The protein operates within carbohydrate degradation; glycolysis; pyruvate from D-glyceraldehyde 3-phosphate: step 3/5. Catalyzes the interconversion of 2-phosphoglycerate and 3-phosphoglycerate. This is 2,3-bisphosphoglycerate-dependent phosphoglycerate mutase from Nautilia profundicola (strain ATCC BAA-1463 / DSM 18972 / AmH).